The sequence spans 160 residues: Protein cornichon homolog 2 (160 aa).

Topologically, residues 1–10 (MAFTFAAFCY) are cytoplasmic. Residues 11 to 31 (MLTLVLCASLIFFVIWHIIAF) form a helical membrane-spanning segment. Topologically, residues 32-72 (DELRTDFKNPIDQGNPARARERLKNIERICCLLRKLVVPEY) are lumenal. The chain crosses the membrane as a helical span at residues 73 to 93 (SIHGLFCLMFLCAAEWVTLGL). The Cytoplasmic segment spans residues 94-138 (NIPLLFYHLWRYFHRPADGSEVMYDAVSIMNADILNYCQKESWCK). Residues 139–159 (LAFYLLSFFYYLYSMVYTLVS) traverse the membrane as a helical segment. A topological domain (lumenal) is located at residue F160.

This sequence belongs to the cornichon family. Acts as an auxiliary subunit for AMPA-selective glutamate receptors (AMPARs). Found in a complex with GRIA1, GRIA2, GRIA3, GRIA4, CNIH3, CACNG2, CACNG3, CACNG4, CACNG5, CACNG7 and CACNG8. Interacts with CACGN8. Interacts with GRIA1. Found in a complex with GRIA1, GRIA2, GRIA3, GRIA4, DLG4 and CACNG8. In terms of tissue distribution, expression is up-regulated in dorsolateral prefrontal cortex of patients with schizophrenia (postmortem brain study).

The protein resides in the endoplasmic reticulum membrane. It localises to the postsynaptic cell membrane. It is found in the cell projection. The protein localises to the dendrite. Its subcellular location is the dendritic spine. The protein resides in the postsynaptic density. Regulates the trafficking and gating properties of AMPA-selective glutamate receptors (AMPARs). Promotes their targeting to the cell membrane and synapses and modulates their gating properties by regulating their rates of activation, deactivation and desensitization. Blocks CACNG8-mediated resensitization of AMPA receptors. The protein is Protein cornichon homolog 2 of Homo sapiens (Human).